Reading from the N-terminus, the 97-residue chain is Aspartyl/glutamyl-tRNA(Asn/Gln) amidotransferase subunit C (97 aa).

This sequence belongs to the GatC family. As to quaternary structure, heterotrimer of A, B and C subunits.

It carries out the reaction L-glutamyl-tRNA(Gln) + L-glutamine + ATP + H2O = L-glutaminyl-tRNA(Gln) + L-glutamate + ADP + phosphate + H(+). It catalyses the reaction L-aspartyl-tRNA(Asn) + L-glutamine + ATP + H2O = L-asparaginyl-tRNA(Asn) + L-glutamate + ADP + phosphate + 2 H(+). In terms of biological role, allows the formation of correctly charged Asn-tRNA(Asn) or Gln-tRNA(Gln) through the transamidation of misacylated Asp-tRNA(Asn) or Glu-tRNA(Gln) in organisms which lack either or both of asparaginyl-tRNA or glutaminyl-tRNA synthetases. The reaction takes place in the presence of glutamine and ATP through an activated phospho-Asp-tRNA(Asn) or phospho-Glu-tRNA(Gln). The polypeptide is Aspartyl/glutamyl-tRNA(Asn/Gln) amidotransferase subunit C (Prochlorococcus marinus (strain MIT 9211)).